The primary structure comprises 269 residues: Ribosomal RNA large subunit methyltransferase E (269 aa).

Gly48, Trp50, Asp68, Asp86, and Asp111 together coordinate S-adenosyl-L-methionine. Residue Lys151 is the Proton acceptor of the active site. Residues 198–256 (PVAAGDRIEVTVEERGDEGDGIAYVEGYSIFVSDADVGETVTVEVVDAKPRFGFATRVD) form the TRAM domain.

The protein belongs to the class I-like SAM-binding methyltransferase superfamily. RNA methyltransferase RlmE family.

It localises to the cytoplasm. It carries out the reaction uridine(2552) in 23S rRNA + S-adenosyl-L-methionine = 2'-O-methyluridine(2552) in 23S rRNA + S-adenosyl-L-homocysteine + H(+). Functionally, specifically methylates the uridine in position 2552 of 23S rRNA at the 2'-O position of the ribose in the fully assembled 50S ribosomal subunit. In Halorubrum lacusprofundi (strain ATCC 49239 / DSM 5036 / JCM 8891 / ACAM 34), this protein is Ribosomal RNA large subunit methyltransferase E.